Reading from the N-terminus, the 192-residue chain is Ribosomal RNA small subunit methyltransferase G (192 aa).

S-adenosyl-L-methionine contacts are provided by residues glycine 63, phenylalanine 68, 112–113, and arginine 125; that span reads IE.

The protein belongs to the methyltransferase superfamily. RNA methyltransferase RsmG family.

The protein localises to the cytoplasm. It catalyses the reaction guanosine(527) in 16S rRNA + S-adenosyl-L-methionine = N(7)-methylguanosine(527) in 16S rRNA + S-adenosyl-L-homocysteine. Its function is as follows. Specifically methylates the N7 position of guanine in position 527 of 16S rRNA. In Rickettsia bellii (strain OSU 85-389), this protein is Ribosomal RNA small subunit methyltransferase G.